The chain runs to 430 residues: Adenylosuccinate synthetase (430 aa).

Residues 12-18 (GDEGKGK) and 40-42 (GHT) contribute to the GTP site. The active-site Proton acceptor is aspartate 13. Mg(2+) is bound by residues aspartate 13 and glycine 40. IMP-binding positions include 13–16 (DEGK), 38–41 (NAGH), threonine 130, arginine 144, glutamine 224, threonine 239, and arginine 303. Histidine 41 functions as the Proton donor in the catalytic mechanism. Substrate is bound at residue 299 to 305 (VNTGRKR). Residues arginine 305, 331–333 (KLD), and 413–415 (STS) each bind GTP.

Belongs to the adenylosuccinate synthetase family. As to quaternary structure, homodimer. It depends on Mg(2+) as a cofactor.

The protein localises to the cytoplasm. It carries out the reaction IMP + L-aspartate + GTP = N(6)-(1,2-dicarboxyethyl)-AMP + GDP + phosphate + 2 H(+). The protein operates within purine metabolism; AMP biosynthesis via de novo pathway; AMP from IMP: step 1/2. Functionally, plays an important role in the de novo pathway of purine nucleotide biosynthesis. Catalyzes the first committed step in the biosynthesis of AMP from IMP. The chain is Adenylosuccinate synthetase from Rhodopseudomonas palustris (strain BisA53).